We begin with the raw amino-acid sequence, 110 residues long: MEVKASLKYARVGAQKARLVADLVRGKDVNEAVKTLTFLNKKTAGMVKKLIESAVANAEYKKVMDVDSLYVKAIWVDQGPVLKRFRPRAQGRAFGVRKKTSHINVVLEEK.

It belongs to the universal ribosomal protein uL22 family. Part of the 50S ribosomal subunit.

Its function is as follows. This protein binds specifically to 23S rRNA; its binding is stimulated by other ribosomal proteins, e.g. L4, L17, and L20. It is important during the early stages of 50S assembly. It makes multiple contacts with different domains of the 23S rRNA in the assembled 50S subunit and ribosome. In terms of biological role, the globular domain of the protein is located near the polypeptide exit tunnel on the outside of the subunit, while an extended beta-hairpin is found that lines the wall of the exit tunnel in the center of the 70S ribosome. The protein is Large ribosomal subunit protein uL22 of Bdellovibrio bacteriovorus (strain ATCC 15356 / DSM 50701 / NCIMB 9529 / HD100).